The chain runs to 1507 residues: MTTNGADPLGRFSALTREWFTTAFAAPTPAQADAWSAISEGNNTLVIAPTGSGKTLAAFLWAIDRLADPAREPSQGTQVLYVSPLKALAVDVERNLRTPLTGITRVAERHGLPAPSITVGVRSGDTPPNQRRAMIANPPDVLITTPESLFLMLTSAARETLTSVRTVIVDEVHAVAATKRGAHLALSLERLDQLLDTPAQRIGLSATVRPPEEVARFLSGQAPTTIVCPPAAKTFDLSVQVPVPDMANLDNNSIWPDVEERIVDLVEAHNSSIVFANSRRLAERLTSRLNEIHAERSGIELPAGPNPEVGGGAPAHLMGSGQANGAPPLLARAHHGSVSKEQRAQVEDDLKSGRLRAVVATSSLELGIDMGAVDLVIQVEAPPSVASGLQRVGRAGHQVGEISQGVLFPKHRTDLIGCAVTVQRMQTGDIETLRVPANPLDVLAQHTVAVAALEPVDADAWFDAVRRSAPFATLPRSAFEATLDLLSGKYPSTEFAELRPRLVYDRDTGTLTARPGAQRLAVTSGGAIPDRGMFTVYLASETEKPSRVGELDEEMVYESRPGDVISLGATSWRITEITHDRVLVIPAPGQPARLPFWRGDSVGRPAELGAAVGAFTGELASLDRKAFDKRCQKMGFAGYATDNLHQLLREQREATGVVPSDTTFVVERFRDELGDWRVILHSPYGLRVHGPLALAVGRRLRERYGIDEKPTASDDGIIVRLPDSGDTPPGADLFVFDADEIEPIVTAEVGGSALFASRFRECAARALLLPRRHPGKRSPLWHQRQRAAQLLDIARKYPDFPIVLEAVRECLQDVYDVPALIELMHKIAQRRLRIVEVETATPSPFAASLLFGYVGAFMYEGDSPLAERRAAALALDTVLLSELLGRVELRELLDPAVVASTSAQLQHLTPERAARDAEGVADLLRLLGPLTEADIAQRCTADNIGAWLDGLHAAKRALPVTYAGQTWWAAVEDIGLLRDGIGVPVPVGVPAAFTESASDPLGDLIGRYARTRGPFTTEQTAARFGLGVRVASDVLSRMAVDGRLIRGEFAADLSGEQWCDAQVLKILRRRSLAALRAQVEPVSTDAYARFLPSWQHVGSTNTTGIDGLATVIEQLAGVPIPASAVESLVFPQRVRDYQPAMLDELLASGEVMWSGAGQIGNGDGWVAFHLADTAPLTLTHGAEIEFTDTHRVILETLGHGGAYFFRQLTDGTVEGTAGQELKQALWELIWAGWVTGDTFAPVRAVLSGPRRSGAPAHRQRQRPPRLSRYSVAHAQTRGTDPTVSGRWSALPAAEPDSTVRAHFQAELLLGRHGVLTKGAVGAEGVPGGFATLYKVLSTFEDAGRCQRGYFVESLGGAQFAVASTVDRLRSYLDNVDPERPEYHAVVLAATDPANPYGAALGWPTDSEAHRPGRKAGALVALVDGRLVWFLERGGRSLLSFGADADAQRAAAGALTDLVSAGRIPSLLVERINGVAVLDPDVDAERAVVQDALLGAGLSRTPRGLRLR.

Positions M1 to A856 are lhr-Core. Positions 24, 31, 54, and 55 each coordinate ATP. The Helicase ATP-binding domain maps to W35 to I226. The ssDNA site is built by R122, R131, T145, S148, and M152. Positions 170 and 171 each coordinate ATP. The short motif at D170–H173 is the DEAH box element. S253, W255, and R279 together coordinate ssDNA. Residues D257–A451 form the Helicase C-terminal domain. Residues I377, R394, and H397 each contribute to the ATP site. 7 residues coordinate ssDNA: K410, Q518, R519, I528, W597, D600, and R777. Residues P436–P529 form a WH domain region. A domain 4 region spans residues D530–A856. The segment at F857–R1507 is CTD.

The protein belongs to the Lhr helicase family. As to quaternary structure, monomer. Homooligomerizes, possibly a homotetramer. The cofactor is Ca(2+).

It catalyses the reaction Couples ATP hydrolysis with the unwinding of duplex DNA by translocating in the 3'-5' direction.. The catalysed reaction is ATP + H2O = ADP + phosphate + H(+). It carries out the reaction Hydrolyzes single-stranded DNA or mismatched double-stranded DNA and polynucleotides, releasing free uracil.. Its function is as follows. A 3'-5' helicase involved in repair of at least 3 types of DNA cross-links, mitomycin C (MMC), cisplatin, and psoralen-UVA. Translocates 3'-to-5' on single-stranded (ss)DNA, unwinding any encountered duplex nucleic acid. A 3'-ssDNA loading strand of at least 15 nucleotides is required for helicase activity. An RNA:DNA hybrid with a 3'-ssDNA loading strand is an 8-fold better helicase substrate than 3'-tailed double-stranded (ds)DNA; substrates where the helicase loads on a 3'-ssRNA tail (DNA:RNA and RNA:RNA) are not unwound. Only (d)ATP is hydrolyzed by the protein, which has no ATPase activity in the absence of ssDNA or ssRNA. Arg-279 and Trp-597 are needed to couple ATP hydrolysis to mechanical work; a salt bridge between Arg-280 and Glu-550 closes a clamp around the ssDNA that is not large enough for dsDNA, while Ile-528 wedges between bases of the loading strand. In terms of biological role, excises uracil residues from ssDNA. Uracil residues in DNA can arise as a result of misincorporation of dUMP residues by DNA polymerase or due to deamination of cytosine. The sequence is that of Lhr helicase/ probable uracil glycosylase from Mycolicibacterium smegmatis (strain ATCC 700084 / mc(2)155) (Mycobacterium smegmatis).